Reading from the N-terminus, the 209-residue chain is Putative BTB/POZ domain-containing protein At2g40450 (209 aa).

Residues 24-98 (ADVRLKAGDS…IYRVDGSICS (75 aa)) enclose the BTB domain.

It participates in protein modification; protein ubiquitination. Its function is as follows. May act as a substrate-specific adapter of an E3 ubiquitin-protein ligase complex (CUL3-RBX1-BTB) which mediates the ubiquitination and subsequent proteasomal degradation of target proteins. The polypeptide is Putative BTB/POZ domain-containing protein At2g40450 (Arabidopsis thaliana (Mouse-ear cress)).